We begin with the raw amino-acid sequence, 382 residues long: Pyrimidine monooxygenase RutA (382 aa).

FMN contacts are provided by residues I68–K69, N134, E143, R159–Y160, and S209.

This sequence belongs to the NtaA/SnaA/DszA monooxygenase family. RutA subfamily.

It catalyses the reaction uracil + FMNH2 + NADH + O2 = (Z)-3-ureidoacrylate + FMN + NAD(+) + H2O + H(+). The enzyme catalyses thymine + FMNH2 + NADH + O2 = (Z)-2-methylureidoacrylate + FMN + NAD(+) + H2O + H(+). Functionally, catalyzes the pyrimidine ring opening between N-3 and C-4 by an unusual flavin hydroperoxide-catalyzed mechanism, adding oxygen atoms in the process to yield ureidoacrylate peracid, that immediately reacts with FMN forming ureidoacrylate and FMN-N(5)-oxide. The FMN-N(5)-oxide reacts spontaneously with NADH to produce FMN. Requires the flavin reductase RutF to regenerate FMN in vivo. In Escherichia coli O8 (strain IAI1), this protein is Pyrimidine monooxygenase RutA.